The chain runs to 209 residues: uncharacterized protein (209 aa).

Residues 1–67 (MEILPKYKPE…LIMYNYWTID (67 aa)) enclose the MPN domain. Zn(2+)-binding residues include His17, His19, and Asp30. The short motif at 17 to 30 (HTHPKGPAEPSIND) is the JAMM motif element.

This is an uncharacterized protein from Acidianus convivator (ATV).